Reading from the N-terminus, the 98-residue chain is NADH-ubiquinone oxidoreductase chain 4L (98 aa).

Transmembrane regions (helical) follow at residues 1-21 (MPVV…GLLI), 29-49 (SLLC…VTVL), and 61-81 (IILL…LVMV).

Belongs to the complex I subunit 4L family. As to quaternary structure, core subunit of respiratory chain NADH dehydrogenase (Complex I) which is composed of 45 different subunits.

It localises to the mitochondrion inner membrane. It catalyses the reaction a ubiquinone + NADH + 5 H(+)(in) = a ubiquinol + NAD(+) + 4 H(+)(out). In terms of biological role, core subunit of the mitochondrial membrane respiratory chain NADH dehydrogenase (Complex I) which catalyzes electron transfer from NADH through the respiratory chain, using ubiquinone as an electron acceptor. Part of the enzyme membrane arm which is embedded in the lipid bilayer and involved in proton translocation. This chain is NADH-ubiquinone oxidoreductase chain 4L (MT-ND4L), found in Ursus americanus (American black bear).